A 318-amino-acid chain; its full sequence is 2-keto-3-deoxygluconate permease (318 aa).

10 consecutive transmembrane segments (helical) span residues 10-30 (LPGG…TLWP), 42-62 (GLIS…GATI), 82-102 (IAVA…GGIP), 109-129 (LSVL…YAAL), 139-159 (AGAV…LILG), 163-183 (LATF…LGFA), 201-221 (TLVP…TIVH), 224-244 (ASGV…LLLA), 257-277 (VAAS…AGMA), and 288-308 (TALV…LTAL).

The protein belongs to the KdgT transporter family.

The protein resides in the cell inner membrane. It catalyses the reaction 2-dehydro-3-deoxy-D-gluconate(in) + H(+)(in) = 2-dehydro-3-deoxy-D-gluconate(out) + H(+)(out). In terms of biological role, catalyzes the proton-dependent uptake of 2-keto-3-deoxygluconate (KDG) into the cell. This chain is 2-keto-3-deoxygluconate permease, found in Xanthomonas oryzae pv. oryzae (strain MAFF 311018).